Consider the following 530-residue polypeptide: MEEIKYIEPAALHDEMLRLRNEKQMDFLESLTGMDWGVADEGDAPNVTRGLGVVYHLESTVTGERIAIKTSTNNRETPEIPSVSDIWKAADFNEREVFDYYGIVFIGHPDMRRLYLRNDWVGHPMRKDNNPEKDNPLRMDNEETYDTTREIELNPDGTYQTQENVIFDDREYVVNIGPQHPATHGVMRFRVSLEGETIKKLDANCGYIHRGIEKMNESLTYPQTLALTDRLDYLGAHQNRHALCMCIEKAMGIEVSERVKYIRTIMDELQRIDSHLLFYSCLAMDLGALTAFFYGFRDREMILDMFEETCGGRLIMNYNTIGGVQADLHPNFIPRVKKFIPYLRGIIHEYHDVFTGNVIARQRLKGVGVLSREDAISFGCTGGTGRASGWACDVRKRMPYGVYDKVDFKEIVYTEGDSFARYMVRMDEIMESLNIIEQLIDNIPEGPIQEKMKPIIRVPEGSYYTAVEGSRGEFGVFLESHGDKTPYRLHYRSTGLPLVSAVDTICRGAKIADLIAIGGTLDYVVPDIDR.

The interval 1–144 (MEEIKYIEPA…NPLRMDNEET (144 aa)) is NADH dehydrogenase I subunit C. The segment at 171–530 (EYVVNIGPQH…LDYVVPDIDR (360 aa)) is NADH dehydrogenase I subunit D.

It in the N-terminal section; belongs to the complex I 30 kDa subunit family. This sequence in the C-terminal section; belongs to the complex I 49 kDa subunit family. In terms of assembly, NDH-1 is composed of 13 different subunits. Subunits NuoB, CD, E, F, and G constitute the peripheral sector of the complex.

The protein localises to the cell inner membrane. It catalyses the reaction a quinone + NADH + 5 H(+)(in) = a quinol + NAD(+) + 4 H(+)(out). NDH-1 shuttles electrons from NADH, via FMN and iron-sulfur (Fe-S) centers, to quinones in the respiratory chain. The immediate electron acceptor for the enzyme in this species is believed to be a menaquinone. Couples the redox reaction to proton translocation (for every two electrons transferred, four hydrogen ions are translocated across the cytoplasmic membrane), and thus conserves the redox energy in a proton gradient. The protein is NADH-quinone oxidoreductase subunit C/D of Bacteroides fragilis (strain ATCC 25285 / DSM 2151 / CCUG 4856 / JCM 11019 / LMG 10263 / NCTC 9343 / Onslow / VPI 2553 / EN-2).